Reading from the N-terminus, the 646-residue chain is 1-deoxy-D-xylulose-5-phosphate synthase (646 aa).

Thiamine diphosphate-binding positions include histidine 86 and 127 to 129; that span reads AHS. Residue aspartate 158 coordinates Mg(2+). Thiamine diphosphate-binding positions include 159 to 160, asparagine 188, tyrosine 295, and glutamate 377; that span reads GA. Asparagine 188 is a binding site for Mg(2+).

Belongs to the transketolase family. DXPS subfamily. As to quaternary structure, homodimer. Requires Mg(2+) as cofactor. Thiamine diphosphate is required as a cofactor.

It catalyses the reaction D-glyceraldehyde 3-phosphate + pyruvate + H(+) = 1-deoxy-D-xylulose 5-phosphate + CO2. It functions in the pathway metabolic intermediate biosynthesis; 1-deoxy-D-xylulose 5-phosphate biosynthesis; 1-deoxy-D-xylulose 5-phosphate from D-glyceraldehyde 3-phosphate and pyruvate: step 1/1. In terms of biological role, catalyzes the acyloin condensation reaction between C atoms 2 and 3 of pyruvate and glyceraldehyde 3-phosphate to yield 1-deoxy-D-xylulose-5-phosphate (DXP). The polypeptide is 1-deoxy-D-xylulose-5-phosphate synthase (Burkholderia ambifaria (strain ATCC BAA-244 / DSM 16087 / CCUG 44356 / LMG 19182 / AMMD) (Burkholderia cepacia (strain AMMD))).